We begin with the raw amino-acid sequence, 372 residues long: Queuine tRNA-ribosyltransferase (372 aa).

The active-site Proton acceptor is the D92. Substrate contacts are provided by residues 92–96, D146, Q188, and G215; that span reads DSGGY. Residues 246–252 form an RNA binding region; the sequence is GIGSLKE. D265 (nucleophile) is an active-site residue. Positions 270 to 274 are RNA binding; important for wobble base 34 recognition; sequence TRLGR. Zn(2+) is bound by residues C303, C305, C308, and H334.

It belongs to the queuine tRNA-ribosyltransferase family. Homodimer. Within each dimer, one monomer is responsible for RNA recognition and catalysis, while the other monomer binds to the replacement base PreQ1. The cofactor is Zn(2+).

It carries out the reaction 7-aminomethyl-7-carbaguanine + guanosine(34) in tRNA = 7-aminomethyl-7-carbaguanosine(34) in tRNA + guanine. Its pathway is tRNA modification; tRNA-queuosine biosynthesis. Catalyzes the base-exchange of a guanine (G) residue with the queuine precursor 7-aminomethyl-7-deazaguanine (PreQ1) at position 34 (anticodon wobble position) in tRNAs with GU(N) anticodons (tRNA-Asp, -Asn, -His and -Tyr). Catalysis occurs through a double-displacement mechanism. The nucleophile active site attacks the C1' of nucleotide 34 to detach the guanine base from the RNA, forming a covalent enzyme-RNA intermediate. The proton acceptor active site deprotonates the incoming PreQ1, allowing a nucleophilic attack on the C1' of the ribose to form the product. After dissociation, two additional enzymatic reactions on the tRNA convert PreQ1 to queuine (Q), resulting in the hypermodified nucleoside queuosine (7-(((4,5-cis-dihydroxy-2-cyclopenten-1-yl)amino)methyl)-7-deazaguanosine). This is Queuine tRNA-ribosyltransferase from Prochlorococcus marinus (strain MIT 9301).